The primary structure comprises 319 residues: MSLNFLDFEQPIAELEAKIDSLTAVSRQDEKLDINLDEEVQRLREKSVELTRKIFADLGAWQVAQLARHPQRPYTLDYIKHIFTDFDELAGDRAYADDKAIVGGIARLDGRPVMIIGHQKGRETKEKIRRNFGMPAPEGYRKALRLMEMADRFRMPIITFIDTPGAYPGVGAEERGQSEAIARNLREMSTLRVPIICTVIGEGGSGGALAIGVGDKVNMLQYSTYSVISPEGCASILWKSADKAPLAAEAMGIIAPRLKELKLIDTVIPEPLGSAHRNVPVMAASLKAQLLADLLDLEGLSEEALLNRRYQRLMNYGYC.

In terms of domain architecture, CoA carboxyltransferase C-terminal spans 35-296 (NLDEEVQRLR…KAQLLADLLD (262 aa)).

This sequence belongs to the AccA family. Acetyl-CoA carboxylase is a heterohexamer composed of biotin carboxyl carrier protein (AccB), biotin carboxylase (AccC) and two subunits each of ACCase subunit alpha (AccA) and ACCase subunit beta (AccD).

Its subcellular location is the cytoplasm. It catalyses the reaction N(6)-carboxybiotinyl-L-lysyl-[protein] + acetyl-CoA = N(6)-biotinyl-L-lysyl-[protein] + malonyl-CoA. It participates in lipid metabolism; malonyl-CoA biosynthesis; malonyl-CoA from acetyl-CoA: step 1/1. Its function is as follows. Component of the acetyl coenzyme A carboxylase (ACC) complex. First, biotin carboxylase catalyzes the carboxylation of biotin on its carrier protein (BCCP) and then the CO(2) group is transferred by the carboxyltransferase to acetyl-CoA to form malonyl-CoA. The protein is Acetyl-coenzyme A carboxylase carboxyl transferase subunit alpha of Pectobacterium atrosepticum (strain SCRI 1043 / ATCC BAA-672) (Erwinia carotovora subsp. atroseptica).